The primary structure comprises 289 residues: MTFQIMTDSTADLSPYYIKKHHLTVLGMTVTVGEETYETIGEAALDNSTLLAAIKKGATVHTSQINSGQFLEVFKKFASADEELLYLAFSSGLSGTYQSALIAQDMVLEEFPSAKITVVDTLAAASGEGFLVEETVKLRDSGKSLTETLEVLSDIIPRLQSRFMVDDLNHLARGGRIPKAVALVGTMANIKPLLDVDPEGRLRQVTKVRGKKKAINQLLEKSLEEMDTAYPRLLISYSGTDEIAQEIKKQAMQKKGISDVDVRPLSPTIVTHTGDGTIAIFSISRKSRE.

The DegV domain maps to 3-284 (FQIMTDSTAD…DGTIAIFSIS (282 aa)). T62 and S94 together coordinate hexadecanoate.

Its function is as follows. May bind long-chain fatty acids, such as palmitate, and may play a role in lipid transport or fatty acid metabolism. The chain is DegV domain-containing protein YteA (yteA) from Lactococcus lactis subsp. lactis (strain IL1403) (Streptococcus lactis).